Consider the following 118-residue polypeptide: NADH-ubiquinone oxidoreductase chain 3 (118 aa).

Transmembrane regions (helical) follow at residues 4-24 (FAPI…PLGV) and 87-107 (IDPF…IGSL).

Belongs to the complex I subunit 3 family.

It localises to the mitochondrion membrane. It catalyses the reaction a ubiquinone + NADH + 5 H(+)(in) = a ubiquinol + NAD(+) + 4 H(+)(out). Functionally, core subunit of the mitochondrial membrane respiratory chain NADH dehydrogenase (Complex I) that is believed to belong to the minimal assembly required for catalysis. Complex I functions in the transfer of electrons from NADH to the respiratory chain. The immediate electron acceptor for the enzyme is believed to be ubiquinone. This Panax ginseng (Korean ginseng) protein is NADH-ubiquinone oxidoreductase chain 3 (ND3).